The sequence spans 84 residues: UPF0512 protein O (84 aa).

It belongs to the UPF0512 family.

The sequence is that of UPF0512 protein O from Dictyostelium discoideum (Social amoeba).